Here is a 313-residue protein sequence, read N- to C-terminus: Protein FixB (313 aa).

255 to 283 (LYLAVGISGQIQHMVGANASQTIFAINKD) is a binding site for FAD.

This sequence belongs to the ETF alpha-subunit/FixB family. In terms of assembly, heterodimer of FixA and FixB.

It functions in the pathway amine and polyamine metabolism; carnitine metabolism. Its function is as follows. Required for anaerobic carnitine reduction. May bring reductant to CaiA. This Escherichia coli O1:K1 / APEC protein is Protein FixB.